Here is a 373-residue protein sequence, read N- to C-terminus: Transcription factor NF-E2 45 kDa subunit (373 aa).

The segment at 1-83 is required for interaction with MAPK8; it reads MSPCPPQQSR…SGFPLPPPPY (83 aa). The tract at residues 1 to 206 is transactivation domain; it reads MSPCPPQQSR…PAAETPLALE (206 aa). 2 short sequence motifs (PXY motif) span residues 61–65 and 79–83; these read PPTTY and PPPPY. The tract at residues 127–150 is disordered; sequence LDIGLPAGPPKPQEDPESDSGLSL. Ser-157 carries the phosphoserine; by MAPK8 modification. The residue at position 170 (Ser-170) is a Phosphoserine; by PKA. The tract at residues 205 to 226 is disordered; it reads LEPSSGPVRAKPTARGEAGSRD. The bZIP domain maps to 266–329; the sequence is LVRDIRRRGK…EVMRQQLTEL (64 aa). The segment at 268–287 is basic motif; the sequence is RDIRRRGKNKVAAQNCRKRK. A leucine-zipper region spans residues 291–298; that stretch reads IVQLEREL. Lys-368 is covalently cross-linked (Glycyl lysine isopeptide (Lys-Gly) (interchain with G-Cter in SUMO1)).

It belongs to the bZIP family. CNC subfamily. In terms of assembly, homodimer; can bind DNA as a homodimer. Erythroid transcription activator nuclear factor erythroid-derived 2 (NF-E2), composed of a heterodimer of NFE2 and MAFK, possesses transactivation activity on beta-globin. Also forms high affinity heterodimer with MAFG; the interaction promotes erythropoiesis. Interacts (via the PXY motif 1) with ITCH (via the WW 1 domain); the interaction promotes 'Lys63'-linked ubiquitination of NFE2, translocates it to the cytoplasm and inhibits its transactivation activity. Interacts with KMT2D/MLL2; the interaction promotes transactivation of the beta-globin locus. Interacts with MAPK8 (phosphorylated form); the interaction leads to phosphorylation of NFE2 in undifferentiated cells. Phosphorylated on serine residues. In undifferentiated erythrocytes, phosphorylated by MAPK8 which then leads to ubiquitination and protein degradation. Post-translationally, sumoylated. Sumoylation is required for translocation to nuclear bodies PODs, anchoring to the gene loci, and transactivation of the beta-globin gene. In terms of processing, ubiquitinated mainly by 'Lys63'-linked ubiquitin. Polyubiquitination with 'Lys63'-linked ubiquitin by ITCH retains NFE2 in the cytoplasm preventing its transactivation activity. In undifferentiated erythrocyte, ubiquitinated after MAPK8-mediatd phosphorylation leading to protein degradation. Expressed in hematopoietic cells and also in colon and testis.

It is found in the nucleus. The protein resides in the PML body. Its subcellular location is the cytoplasm. In terms of biological role, component of the NF-E2 complex essential for regulating erythroid and megakaryocytic maturation and differentiation. Binds to the hypersensitive site 2 (HS2) of the beta-globin control region (LCR). This subunit (NFE2) recognizes the TCAT/C sequence of the AP-1-like core palindrome present in a number of erythroid and megakaryocytic gene promoters. Requires MAFK or other small MAF proteins for binding to the NF-E2 motif. May play a role in all aspects of hemoglobin production from globin and heme synthesis to procurement of iron. This is Transcription factor NF-E2 45 kDa subunit (NFE2) from Homo sapiens (Human).